The chain runs to 500 residues: tRNA (guanine(37)-N(1))-methyltransferase (500 aa).

Residues H215, 253–254 (DL), 281–282 (DA), and N312 contribute to the S-adenosyl-L-methionine site. Residues 463–500 (QIVAKKTPKPAPRPLPAKNKTTPDTNKMETDLTKLEMK) are disordered. A compositionally biased stretch (basic and acidic residues) spans 488–500 (NKMETDLTKLEMK).

The protein belongs to the class I-like SAM-binding methyltransferase superfamily. TRM5/TYW2 family. Monomer.

It is found in the mitochondrion matrix. The protein resides in the nucleus. The protein localises to the cytoplasm. The enzyme catalyses guanosine(37) in tRNA + S-adenosyl-L-methionine = N(1)-methylguanosine(37) in tRNA + S-adenosyl-L-homocysteine + H(+). In terms of biological role, specifically methylates the N1 position of guanosine-37 in various cytoplasmic and mitochondrial tRNAs. Methylation is not dependent on the nature of the nucleoside 5' of the target nucleoside. This is the first step in the biosynthesis of wybutosine (yW), a modified base adjacent to the anticodon of tRNAs and required for accurate decoding. The sequence is that of tRNA (guanine(37)-N(1))-methyltransferase from Anopheles darlingi (Mosquito).